A 498-amino-acid polypeptide reads, in one-letter code: Glycerol kinase (498 aa).

An ADP-binding site is contributed by Thr12. 3 residues coordinate ATP: Thr12, Thr13, and Ser14. Sn-glycerol 3-phosphate is bound at residue Thr12. Residue Arg16 coordinates ADP. Sn-glycerol 3-phosphate is bound by residues Arg82, Glu83, Tyr135, and Asp245. Residues Arg82, Glu83, Tyr135, Asp245, and Gln246 each contribute to the glycerol site. ADP-binding residues include Thr267 and Gly310. ATP-binding residues include Thr267, Gly310, Gln314, and Gly411. Gly411 and Asn415 together coordinate ADP.

This sequence belongs to the FGGY kinase family. As to quaternary structure, homotetramer and homodimer (in equilibrium).

The catalysed reaction is glycerol + ATP = sn-glycerol 3-phosphate + ADP + H(+). The protein operates within polyol metabolism; glycerol degradation via glycerol kinase pathway; sn-glycerol 3-phosphate from glycerol: step 1/1. Activated by phosphorylation and inhibited by fructose 1,6-bisphosphate (FBP). Its function is as follows. Key enzyme in the regulation of glycerol uptake and metabolism. Catalyzes the phosphorylation of glycerol to yield sn-glycerol 3-phosphate. This chain is Glycerol kinase, found in Clostridium botulinum (strain Eklund 17B / Type B).